We begin with the raw amino-acid sequence, 372 residues long: Probable NADH-dependent flavin oxidoreductase YqiG (372 aa).

It belongs to the NADH:flavin oxidoreductase/NADH oxidase family.

In Bacillus subtilis (strain 168), this protein is Probable NADH-dependent flavin oxidoreductase YqiG (yqiG).